Here is a 112-residue protein sequence, read N- to C-terminus: Transmembrane protein 14C (112 aa).

The next 4 membrane-spanning stretches (helical) occupy residues Val-7–Ile-27, Ala-32–Ala-52, Val-62–His-82, and Phe-86–Ser-106.

The protein belongs to the TMEM14 family.

It localises to the mitochondrion membrane. Required for normal heme biosynthesis. This chain is Transmembrane protein 14C (TMEM14C), found in Pongo abelii (Sumatran orangutan).